The chain runs to 98 residues: Protein E7 (98 aa).

The interval 1–40 (MHGDTPTLHEYMLDLQPETTDLYCYEQLNDSSEEEDEIDG) is E7 terminal domain. The LXCXE motif; interaction with host RB1 and TMEM173/STING motif lies at 22 to 26 (LYCYE). A zinc finger spans residues 58–94 (CCKCDSTLRLCVQSTHVDIRTLEDLLMGTLGIVCPIC). Positions 76–84 (IRTLEDLLM) match the Nuclear export signal motif.

The protein belongs to the papillomaviridae E7 protein family. In terms of assembly, homodimer. Homooligomer. Interacts with host RB1; this interaction induces dissociation of RB1-E2F1 complex thereby disrupting RB1 activity. Interacts with host EP300; this interaction represses EP300 transcriptional activity. Forms a complex with CHD4 and HDAC1, thereby altering the action of host histone deacetylation. A similar complex involving E7, CHD4 and HDAC2 may also form. Interacts with protein E2; this interaction inhibits E7 oncogenic activity. Highly phosphorylated.

It localises to the host cytoplasm. The protein localises to the host nucleus. In terms of biological role, plays a role in viral genome replication by driving entry of quiescent cells into the cell cycle. Stimulation of progression from G1 to S phase allows the virus to efficiently use the cellular DNA replicating machinery to achieve viral genome replication. E7 protein has both transforming and trans-activating activities. Induces the disassembly of the E2F1 transcription factor from RB1, with subsequent transcriptional activation of E2F1-regulated S-phase genes. Interferes with host histone deacetylation mediated by HDAC1 and HDAC2, leading to transcription activation. Also plays a role in the inhibition of both antiviral and antiproliferative functions of host interferon alpha. Interaction with host TMEM173/STING impairs the ability of TMEM173/STING to sense cytosolic DNA and promote the production of type I interferon (IFN-alpha and IFN-beta). This is Protein E7 from Human papillomavirus type 16.